A 99-amino-acid chain; its full sequence is UPF0235 protein Cag_0319 (99 aa).

Belongs to the UPF0235 family.

This Chlorobium chlorochromatii (strain CaD3) protein is UPF0235 protein Cag_0319.